Here is a 1040-residue protein sequence, read N- to C-terminus: Contactin-2 (1040 aa).

The first 30 residues, Met1–Ala30, serve as a signal peptide directing secretion. Ig-like C2-type domains follow at residues Pro39–Arg130, Gln135–Ser224, Pro241–Ile324, Pro329–Ala413, Pro419–Ser506, and Thr511–Leu605. 4 disulfide bridges follow: Cys63/Cys113, Cys157/Cys209, Cys263/Cys308, and Cys350/Cys397. N-linked (GlcNAc...) asparagine glycans are attached at residues Asn78, Asn200, and Asn206. 4 N-linked (GlcNAc...) asparagine glycosylation sites follow: Asn463, Asn479, Asn500, and Asn527. Fibronectin type-III domains lie at Pro612–Ala710, Ala715–Glu812, Ala817–Pro913, and Pro917–Thr1008. A glycan (N-linked (GlcNAc...) asparagine) is linked at Asn777. The short motif at Arg796–Asp798 is the Cell attachment site element. N-linked (GlcNAc...) asparagine glycosylation is found at Asn832, Asn920, and Asn942. The interval Arg895–Ile921 is disordered. Ala1015 carries GPI-anchor amidated alanine lipidation. The propeptide at Ala1016–Leu1040 is removed in mature form.

This sequence belongs to the immunoglobulin superfamily. Contactin family. As to expression, in neural tissues in embryos, and in adult brain, spinal cord and cerebellum.

It localises to the cell membrane. Its function is as follows. May play a role in the initial growth and guidance of axons. May be involved in cell adhesion. In conjunction with another transmembrane protein, CNTNAP2, contributes to the organization of axonal domains at nodes of Ranvier by maintaining voltage-gated potassium channels at the juxtaparanodal region. The protein is Contactin-2 (Cntn2) of Rattus norvegicus (Rat).